We begin with the raw amino-acid sequence, 716 residues long: Zinc finger protein 840 (716 aa).

In terms of domain architecture, KRAB spans 42–113; the sequence is VRFRDVAVVF…EREVTGDPCP (72 aa). 18 consecutive C2H2-type zinc fingers follow at residues 151-173, 207-229, 235-257, 277-299, 305-327, 333-355, 361-383, 389-411, 417-439, 445-467, 473-495, 501-523, 549-571, 577-599, 605-627, 633-655, 661-683, and 689-711; these read YECDDCGMAFGHVSQLTGHQKIH, FECNQCGETFNRPSKVIQHQSMH, YKCDVCQKAFRFLSSLSIHQRFH, FSCNFCGKTFHRFSEKTQHLLIH, YTCNYCKKEFNPYSKFILHQRTH, HKCDVCEKSFKSISNLNKHQKTH, FSCNECKKTFAQRTDLARHQQIH, FICSSCKKTFVRLSDLTQHKGTH, YQCTTCEKAFKYRSNFTKHQKTH, FACNECGKTYRLNWELNQHKKIH, YECGECGKRFNNNSNLNKHKKIH, FVCNQCGKAFSLNSKLSRHQRTH, FPCNECKKAFAQRMDLARHQQIH, YQCTTCEKAFKYQSNFTKHQKTH, FTCNECGKTFRLNWKLNQHKKIH, YECGECGKCFNNNSNLSKHKKIH, and FVCNQCGKAFSLNSKLSRHQITH. The segment at 515-548 is disordered; the sequence is KLSRHQRTHNKKENSSKSVSNLNKHQKTHAGEKP.

The protein belongs to the krueppel C2H2-type zinc-finger protein family.

It localises to the nucleus. In terms of biological role, may be involved in transcriptional regulation. In Homo sapiens (Human), this protein is Zinc finger protein 840 (ZNF840P).